The following is a 509-amino-acid chain: Kynureninase 1 (509 aa).

Pyridoxal 5'-phosphate is bound by residues Leu-154, Thr-155, 183–186 (FPSD), Asp-270, His-273, and Tyr-295. Lys-296 is modified (N6-(pyridoxal phosphate)lysine). Residues Trp-345 and Asn-373 each contribute to the pyridoxal 5'-phosphate site.

The protein belongs to the kynureninase family. Homodimer. Requires pyridoxal 5'-phosphate as cofactor.

The protein localises to the cytoplasm. The catalysed reaction is L-kynurenine + H2O = anthranilate + L-alanine + H(+). It carries out the reaction 3-hydroxy-L-kynurenine + H2O = 3-hydroxyanthranilate + L-alanine + H(+). Its pathway is amino-acid degradation; L-kynurenine degradation; L-alanine and anthranilate from L-kynurenine: step 1/1. It functions in the pathway cofactor biosynthesis; NAD(+) biosynthesis; quinolinate from L-kynurenine: step 2/3. Functionally, catalyzes the cleavage of L-kynurenine (L-Kyn) and L-3-hydroxykynurenine (L-3OHKyn) into anthranilic acid (AA) and 3-hydroxyanthranilic acid (3-OHAA), respectively. This is Kynureninase 1 from Chaetomium globosum (strain ATCC 6205 / CBS 148.51 / DSM 1962 / NBRC 6347 / NRRL 1970) (Soil fungus).